Consider the following 360-residue polypeptide: Cyclin-dependent kinase 10 (360 aa).

The Protein kinase domain occupies 39–323 (FEKLNRIGEG…SGDCLESSYF (285 aa)). ATP contacts are provided by residues 45 to 53 (IGEGTYGIV) and K68. D163 (proton acceptor) is an active-site residue. T196 carries the phosphothreonine modification. The tract at residues 334-360 (LMPTFPHHRNKRAAPAAAEGQSKRCRP) is disordered.

This sequence belongs to the protein kinase superfamily. CMGC Ser/Thr protein kinase family. CDC2/CDKX subfamily. As to quaternary structure, heterodimer with CCNQ, the interaction is required for kinase activity. Interacts with ETS2. Interacts with PRK2.

It localises to the cytoplasm. Its subcellular location is the cytoskeleton. The protein localises to the cilium basal body. The enzyme catalyses L-seryl-[protein] + ATP = O-phospho-L-seryl-[protein] + ADP + H(+). The catalysed reaction is L-threonyl-[protein] + ATP = O-phospho-L-threonyl-[protein] + ADP + H(+). Functionally, cyclin-dependent kinase that phosphorylates the transcription factor ETS2 (in vitro) and positively controls its proteasomal degradation (in cells). Involved in the regulation of actin cytoskeleton organization through the phosphorylation of actin dynamics regulators such as PKN2. Is a negative regulator of ciliogenesis through phosphorylation of PKN2 and promotion of RhoA signaling. The sequence is that of Cyclin-dependent kinase 10 (Cdk10) from Mus musculus (Mouse).